A 467-amino-acid chain; its full sequence is Chlorophenol O-methyltransferase (467 aa).

The interval 1–41 (MAELRAPSSLSTERNGSASNTDVDKQKLNHLYQNGNKKTGS) is disordered. 2 stretches are compositionally biased toward polar residues: residues 8 to 21 (SSLSTERNGSASNT) and 31 to 41 (LYQNGNKKTGS). Residue D320 coordinates S-adenosyl-L-methionine. H368 (proton acceptor) is an active-site residue.

It belongs to the class I-like SAM-binding methyltransferase superfamily. Cation-independent O-methyltransferase family.

It catalyses the reaction 2,4,6-trichlorophenol + S-adenosyl-L-methionine = 2,4,6-trichloroanisole + S-adenosyl-L-homocysteine. S-adenosyl-L-homocysteine acts as a competitive inhibitor. Also strongly inhibited by low concentrations of several metal ions, such as Cu(2+), Hg(2+), Zn(2+), and Ag(+), and to a lesser extent by p-chloromercuribenzoic acid, but it is not significantly affected by several thiols or other thiol reagents. Chlorophenol O-methyltransferase that methylates chlorophenols into chloroanisoles which are thought to be responsible for cork taint of wines. The only single chlorophenol (CP) methylated is 2-CP; neither 3-CP nor 4-CP are effective substrates. Within the dichlorophenols (DCPs), 2,4-DCP supports the highest rate of O-methylation, and the activity decreases in the following order: 2,3-DCP, 2,5-DCP, 2,6-DCP, and 3,4-DCP. Within the trichlorophenol (TCP) group, the maximal activity is observed with 2,3,4-TCP, whereas there is increasingly reduced activity with 2,4,5-TCP, 2,4,6-TCP, and 2,3,6-TCP. The only tetrachlorophenol (TeCP) that is methylated is 2,3,4,5-TeCP, since no activity can be detected with 2,3,4,6-TeCP and 2,3,5,6-TeCP. Is also able to methylate other halogenated phenols containing fluoro or bromo substituents, whereas other hydroxylated compounds, such as hydroxylated benzoic acids, hydroxybenzaldehydes, phenol, 2-metoxyphenol, and dihydroxybenzene, were not methylated. In Trichoderma longibrachiatum, this protein is Chlorophenol O-methyltransferase.